Here is a 271-residue protein sequence, read N- to C-terminus: Formamidopyrimidine-DNA glycosylase (271 aa).

The active-site Schiff-base intermediate with DNA is P2. Residue E3 is the Proton donor of the active site. K58 functions as the Proton donor; for beta-elimination activity in the catalytic mechanism. DNA contacts are provided by H92, R111, and R152. The FPG-type zinc-finger motif lies at 237 to 271 (FVYGREGEACKQCGRVLKHATIGQRATVWCGSCQR). The active-site Proton donor; for delta-elimination activity is R261.

The protein belongs to the FPG family. Monomer. Requires Zn(2+) as cofactor.

It carries out the reaction Hydrolysis of DNA containing ring-opened 7-methylguanine residues, releasing 2,6-diamino-4-hydroxy-5-(N-methyl)formamidopyrimidine.. The catalysed reaction is 2'-deoxyribonucleotide-(2'-deoxyribose 5'-phosphate)-2'-deoxyribonucleotide-DNA = a 3'-end 2'-deoxyribonucleotide-(2,3-dehydro-2,3-deoxyribose 5'-phosphate)-DNA + a 5'-end 5'-phospho-2'-deoxyribonucleoside-DNA + H(+). Functionally, involved in base excision repair of DNA damaged by oxidation or by mutagenic agents. Acts as a DNA glycosylase that recognizes and removes damaged bases. Has a preference for oxidized purines, such as 7,8-dihydro-8-oxoguanine (8-oxoG). Has AP (apurinic/apyrimidinic) lyase activity and introduces nicks in the DNA strand. Cleaves the DNA backbone by beta-delta elimination to generate a single-strand break at the site of the removed base with both 3'- and 5'-phosphates. The chain is Formamidopyrimidine-DNA glycosylase from Xanthomonas axonopodis pv. citri (strain 306).